Reading from the N-terminus, the 92-residue chain is Small ribosomal subunit protein uS19 (92 aa).

This sequence belongs to the universal ribosomal protein uS19 family.

Functionally, protein S19 forms a complex with S13 that binds strongly to the 16S ribosomal RNA. This is Small ribosomal subunit protein uS19 from Rhodopseudomonas palustris (strain BisA53).